Here is an 818-residue protein sequence, read N- to C-terminus: Response regulator SSK1 (818 aa).

In terms of domain architecture, Response regulatory spans 611-769 (NVLIVEDNPI…WLERKVMEWG (159 aa)). The residue at position 660 (Asp-660) is a 4-aspartylphosphate.

It belongs to the SSK1 family.

The protein resides in the cytoplasm. In terms of biological role, two-domain response regulator protein in the two-component signal transduction system of the HOG1 pathway. Modulates stress response, melanin biosynthesis and virulence via its regulation of the phosphorylation of HOG1. The chain is Response regulator SSK1 from Verticillium dahliae (strain VdLs.17 / ATCC MYA-4575 / FGSC 10137) (Verticillium wilt).